A 510-amino-acid chain; its full sequence is ATP synthase subunit alpha (510 aa).

Position 169-176 (169-176 (GDRQTGKT)) interacts with ATP.

It belongs to the ATPase alpha/beta chains family. As to quaternary structure, F-type ATPases have 2 components, CF(1) - the catalytic core - and CF(0) - the membrane proton channel. CF(1) has five subunits: alpha(3), beta(3), gamma(1), delta(1), epsilon(1). CF(0) has three main subunits: a(1), b(2) and c(9-12). The alpha and beta chains form an alternating ring which encloses part of the gamma chain. CF(1) is attached to CF(0) by a central stalk formed by the gamma and epsilon chains, while a peripheral stalk is formed by the delta and b chains.

Its subcellular location is the cell inner membrane. The enzyme catalyses ATP + H2O + 4 H(+)(in) = ADP + phosphate + 5 H(+)(out). In terms of biological role, produces ATP from ADP in the presence of a proton gradient across the membrane. The alpha chain is a regulatory subunit. In Rickettsia peacockii (strain Rustic), this protein is ATP synthase subunit alpha.